Consider the following 209-residue polypeptide: Imidazole glycerol phosphate synthase subunit HisH (209 aa).

The Glutamine amidotransferase type-1 domain occupies 1–205 (MIAIIDYGMG…KGVVETWKSS (205 aa)). Cys79 (nucleophile) is an active-site residue. Active-site residues include His180 and Glu182.

Heterodimer of HisH and HisF.

Its subcellular location is the cytoplasm. The catalysed reaction is 5-[(5-phospho-1-deoxy-D-ribulos-1-ylimino)methylamino]-1-(5-phospho-beta-D-ribosyl)imidazole-4-carboxamide + L-glutamine = D-erythro-1-(imidazol-4-yl)glycerol 3-phosphate + 5-amino-1-(5-phospho-beta-D-ribosyl)imidazole-4-carboxamide + L-glutamate + H(+). The enzyme catalyses L-glutamine + H2O = L-glutamate + NH4(+). The protein operates within amino-acid biosynthesis; L-histidine biosynthesis; L-histidine from 5-phospho-alpha-D-ribose 1-diphosphate: step 5/9. In terms of biological role, IGPS catalyzes the conversion of PRFAR and glutamine to IGP, AICAR and glutamate. The HisH subunit catalyzes the hydrolysis of glutamine to glutamate and ammonia as part of the synthesis of IGP and AICAR. The resulting ammonia molecule is channeled to the active site of HisF. This is Imidazole glycerol phosphate synthase subunit HisH from Bacillus thuringiensis (strain Al Hakam).